The sequence spans 512 residues: MKKQHDTIIVLDFGSQYNQLIARRIREFGVYSELHPHTITAEEIKAMNPKGIIFSGGPNSVYGEGALHCDEKIFELGLPIFGICYGMQLMTQHFGGKVERANHREYGKAVLKVENESKLYANLPEEQVVWMSHGDLVTGLPEGFVVDATSESCPIAGMSNEEKNLYGVQFHPEVRHSEHGNDLIKNFVFGVCGCSEGWNMENFIEVELEKIRETVGDKKVLCALSGGVDSSVVAVLIHKAIGDQLTCIFVDHGLLRKGEAEGVMKTFSEGFHMNVIKVDAQERFMNKLKGVEDPEQKRKIIGNEFIYVFDDEASKLQGMDFLAQGTLYTDIVESGTATAQTIKSHHNVGGLPEDMQFKLIEPLNTLFKDEVRVLGSELGIPDEIVWRQPFPGPGLGIRVLGEITEEKLEIVRESDAILREEIIKAGLDREIWQYFTALPGMRSVGVMGDERTYDYTVGIRAVTSIDGMTADWARIPWDVLEKISVRIVNEVKHVNRIVYDVTSKPPATIEWE.

The Glutamine amidotransferase type-1 domain maps to 7–197 (TIIVLDFGSQ…VFGVCGCSEG (191 aa)). The active-site Nucleophile is cysteine 84. Active-site residues include histidine 171 and glutamate 173. Residues 198-387 (WNMENFIEVE…LGIPDEIVWR (190 aa)) enclose the GMPS ATP-PPase domain. 225–231 (SGGVDSS) lines the ATP pocket.

As to quaternary structure, homodimer.

The enzyme catalyses XMP + L-glutamine + ATP + H2O = GMP + L-glutamate + AMP + diphosphate + 2 H(+). It participates in purine metabolism; GMP biosynthesis; GMP from XMP (L-Gln route): step 1/1. Functionally, catalyzes the synthesis of GMP from XMP. The sequence is that of GMP synthase [glutamine-hydrolyzing] from Bacillus cereus (strain G9842).